The sequence spans 129 residues: Dynein 14 kDa light chain, flagellar outer arm (129 aa).

Residues 2–109 enclose the Thioredoxin domain; it reads AFITEIANEA…LNRIVTELSG (108 aa). Cys34 and Cys37 are oxidised to a cystine. A disordered region spans residues 107–129; that stretch reads LSGKNPPPAAPAAAPAAPAAEAS. A compositionally biased stretch (low complexity) spans 117–129; that stretch reads PAAAPAAPAAEAS.

As to quaternary structure, consists of at least 3 heavy chains (alpha, beta and gamma), 2 intermediate chains and 8 light chains.

The protein resides in the cell projection. Its subcellular location is the cilium. The protein localises to the flagellum. It is found in the cytoplasm. It localises to the cytoskeleton. The protein resides in the flagellum axoneme. May be involved in regulating the redox state of functionally important thiol groups within dynein. The polypeptide is Dynein 14 kDa light chain, flagellar outer arm (Chlamydomonas reinhardtii (Chlamydomonas smithii)).